The chain runs to 77 residues: Homeodomain-only protein (77 aa).

The homeobox; degenerate DNA-binding region spans Ala-7–Ala-65.

Its subcellular location is the nucleus. The protein resides in the cytoplasm. Its function is as follows. Atypical homeodomain protein which does not bind DNA and is required to modulate cardiac growth and development. May act via an interaction with SRF, leading to modulate the expression of SRF-dependent cardiac-specific genes and cardiac development. May act as a co-chaperone for HSPA1A and HSPA1B chaperone proteins and assist in chaperone-mediated protein refolding. The sequence is that of Homeodomain-only protein (hopx) from Danio rerio (Zebrafish).